Consider the following 959-residue polypeptide: ATP-dependent 6-phosphofructokinase subunit beta (959 aa).

The N-terminal catalytic PFK domain 1 stretch occupies residues 2-573 (TVTTPFVNGT…HLNNFMAINS (572 aa)). Residues 144–167 (KNAVSTKPTPPPAPEASAESGLSS) form a disordered region. T152 is subject to Phosphothreonine. Residues 158–167 (EASAESGLSS) are compositionally biased toward low complexity. A phosphoserine mark is found at S163 and S171. ATP contacts are provided by residues G206, 270–271 (RC), and 300–303 (GDGS). Residue D301 coordinates Mg(2+). Residues 346–348 (SID), R383, 390–392 (MGR), E447, R475, and 481–484 (HVQR) each bind beta-D-fructose 6-phosphate. D348 (proton acceptor) is an active-site residue. The interdomain linker stretch occupies residues 574 to 587 (ADHNEPKLPKDKRL). The segment at 588–959 (KIAIVNVGAP…DHLVGRKRVD (372 aa)) is C-terminal regulatory PFK domain 2. Residues R658, 716–720 (TLSNN), R754, and 761–763 (QGG) contribute to the beta-D-fructose 2,6-bisphosphate site. At S803 the chain carries Phosphoserine. Beta-D-fructose 2,6-bisphosphate contacts are provided by residues K847, 853–856 (HVQQ), and R935.

The protein belongs to the phosphofructokinase type A (PFKA) family. ATP-dependent PFK group I subfamily. Eukaryotic two domain clade 'E' sub-subfamily. Heterooctamer of 4 alpha and 4 beta chains. Mg(2+) is required as a cofactor.

The protein localises to the cytoplasm. It localises to the mitochondrion outer membrane. It catalyses the reaction beta-D-fructose 6-phosphate + ATP = beta-D-fructose 1,6-bisphosphate + ADP + H(+). It functions in the pathway carbohydrate degradation; glycolysis; D-glyceraldehyde 3-phosphate and glycerone phosphate from D-glucose: step 3/4. With respect to regulation, allosterically activated by ADP, AMP, or fructose 2,6-bisphosphate, and allosterically inhibited by ATP or citrate. In terms of biological role, catalyzes the phosphorylation of D-fructose 6-phosphate to fructose 1,6-bisphosphate by ATP, the first committing step of glycolysis. The chain is ATP-dependent 6-phosphofructokinase subunit beta (PFK2) from Saccharomyces cerevisiae (strain ATCC 204508 / S288c) (Baker's yeast).